A 249-amino-acid polypeptide reads, in one-letter code: 3-deoxy-D-manno-octulosonic acid kinase (249 aa).

D175 is a catalytic residue.

The protein belongs to the protein kinase superfamily. KdkA/RfaP family.

The protein localises to the cell inner membrane. It catalyses the reaction an alpha-Kdo-(2-&gt;6)-lipid IVA + ATP = a 4-O-phospho-alpha-Kdo-(2-&gt;6)-lipid IVA + ADP + H(+). Its pathway is bacterial outer membrane biogenesis; LPS core biosynthesis. Catalyzes the ATP-dependent phosphorylation of the 3-deoxy-D-manno-octulosonic acid (Kdo) residue in Kdo-lipid IV(A) at the 4-OH position. This is 3-deoxy-D-manno-octulosonic acid kinase from Xanthomonas euvesicatoria pv. vesicatoria (strain 85-10) (Xanthomonas campestris pv. vesicatoria).